Reading from the N-terminus, the 231-residue chain is Achaete-scute homolog 1 (231 aa).

Disordered regions lie at residues 1–24 (MESS…FLPP) and 39–92 (AAAA…PELM). A compositionally biased stretch (low complexity) spans 39–51 (AAAAAQSAQQQQP). The span at 76 to 85 (SAAKQVKRQR) shows a compositional bias: basic residues. A bHLH domain is found at 113–165 (AAVARRNERERNRVKLVNLGFATLREHVPNGAANKKMSKVETLRSAVEYIRAL). Lysine 151 carries the N6-acetyllysine modification.

Efficient DNA binding requires dimerization with another bHLH protein. Forms a heterodimer with TCF3. As to expression, developing CNS and PNS at embryonic and postnatal stages. Expressed in the epithelium of glandular stomach.

Its subcellular location is the nucleus. Transcription factor that plays a key role in neuronal differentiation: acts as a pioneer transcription factor, accessing closed chromatin to allow other factors to bind and activate neural pathways. Directly binds the E box motif (5'-CANNTG-3') on promoters and promotes transcription of neuronal genes. The combination of three transcription factors, ASCL1, POU3F2/BRN2 and MYT1L, is sufficient to reprogram fibroblasts and other somatic cells into induced neuronal (iN) cells in vitro. Plays a role at early stages of development of specific neural lineages in most regions of the CNS, and of several lineages in the PNS. Essential for the generation of olfactory and autonomic neurons. Acts synergistically with FOXN4 to specify the identity of V2b neurons rather than V2a from bipotential p2 progenitors during spinal cord neurogenesis, probably through DLL4-NOTCH signaling activation. Involved in the regulation of neuroendocrine cell development in the glandular stomach. In Mus musculus (Mouse), this protein is Achaete-scute homolog 1.